The primary structure comprises 467 residues: Ribosomal protein uS12 methylthiotransferase RimO (467 aa).

Residues 1-27 form a disordered region; it reads MTSNPPDLRPDLAPKPTFGTAPRPDQP. In terms of domain architecture, MTTase N-terminal spans 27–137; that stretch reads PTLGMVSLGC…VLDAVHAAVP (111 aa). Residues cysteine 36, cysteine 72, cysteine 101, cysteine 168, cysteine 172, and cysteine 175 each coordinate [4Fe-4S] cluster. The Radical SAM core domain occupies 154–397; sequence LTPRHFSYLK…MEKAQAISEA (244 aa). A TRAM domain is found at 400 to 467; it reads ASKVGQTLQV…GEYDLWGALR (68 aa).

It belongs to the methylthiotransferase family. RimO subfamily. Requires [4Fe-4S] cluster as cofactor.

It is found in the cytoplasm. The catalysed reaction is L-aspartate(89)-[ribosomal protein uS12]-hydrogen + (sulfur carrier)-SH + AH2 + 2 S-adenosyl-L-methionine = 3-methylsulfanyl-L-aspartate(89)-[ribosomal protein uS12]-hydrogen + (sulfur carrier)-H + 5'-deoxyadenosine + L-methionine + A + S-adenosyl-L-homocysteine + 2 H(+). Its function is as follows. Catalyzes the methylthiolation of an aspartic acid residue of ribosomal protein uS12. This Ruegeria sp. (strain TM1040) (Silicibacter sp.) protein is Ribosomal protein uS12 methylthiotransferase RimO.